Reading from the N-terminus, the 200-residue chain is Putative AgrB-like protein (200 aa).

Helical transmembrane passes span 49 to 69, 88 to 108, 114 to 134, 148 to 168, and 171 to 191; these read LIITIILALLLHELVPVLVFM, LLCTILTAVTFVGVPYLIQFT, LFRFILCLLLTVPIGMFSPAV, ALKHKAIITSLVFSFLQFLVS, and LGTIIVVSLLLVFTLIVPLKG.

It belongs to the AgrB family.

The protein localises to the cell membrane. Its function is as follows. May be involved in the proteolytic processing of a quorum sensing system signal molecule precursor. This chain is Putative AgrB-like protein, found in Lactiplantibacillus plantarum (strain ATCC BAA-793 / NCIMB 8826 / WCFS1) (Lactobacillus plantarum).